An 851-amino-acid polypeptide reads, in one-letter code: DNA mismatch repair protein MutS (851 aa).

Position 614–621 (614–621 (GPNMGGKS)) interacts with ATP.

The protein belongs to the DNA mismatch repair MutS family.

In terms of biological role, this protein is involved in the repair of mismatches in DNA. It is possible that it carries out the mismatch recognition step. This protein has a weak ATPase activity. In Yersinia pseudotuberculosis serotype O:1b (strain IP 31758), this protein is DNA mismatch repair protein MutS.